The sequence spans 431 residues: Glutamate--tRNA ligase 1 (431 aa).

The 'HIGH' region signature appears at 6 to 16 (PSPTGDMHIGN). Residues 235–239 (KMSKR) carry the 'KMSKS' region motif. Lys-238 provides a ligand contact to ATP.

Belongs to the class-I aminoacyl-tRNA synthetase family. Glutamate--tRNA ligase type 1 subfamily. In terms of assembly, monomer.

It is found in the cytoplasm. The enzyme catalyses tRNA(Glu) + L-glutamate + ATP = L-glutamyl-tRNA(Glu) + AMP + diphosphate. Catalyzes the attachment of glutamate to tRNA(Glu) in a two-step reaction: glutamate is first activated by ATP to form Glu-AMP and then transferred to the acceptor end of tRNA(Glu). This Nitratiruptor sp. (strain SB155-2) protein is Glutamate--tRNA ligase 1.